We begin with the raw amino-acid sequence, 228 residues long: Cytidylate kinase (228 aa).

Residue 10 to 18 (GPSGSGKGT) participates in ATP binding.

This sequence belongs to the cytidylate kinase family. Type 1 subfamily.

Its subcellular location is the cytoplasm. The catalysed reaction is CMP + ATP = CDP + ADP. The enzyme catalyses dCMP + ATP = dCDP + ADP. In Acinetobacter baumannii (strain AB0057), this protein is Cytidylate kinase.